We begin with the raw amino-acid sequence, 552 residues long: Two-component response regulator ARR10 (552 aa).

In terms of domain architecture, Response regulatory spans 18–133 (RVLAVDDDQT…ELKNIWQHVV (116 aa)). Aspartate 69 bears the 4-aspartylphosphate mark. Residues 139 to 181 (KKNKSNVSNGSGNCDKANRKRKEQYEEEEEEERGNDNDDPTAQ) are disordered. Residues 151 to 173 (NCDKANRKRKEQYEEEEEEERGN) are a coiled coil. The segment covering 163–177 (YEEEEEEERGNDNDD) has biased composition (acidic residues). Residues 182-185 (KKPR) carry the Nuclear localization signal motif. Positions 185–235 (RVLWTHELHNKFLAAVDHLGVERAVPKKILDLMNVDKLTRENVASHLQKFR) form a DNA-binding region, myb-like GARP.

The protein belongs to the ARR family. Type-B subfamily. In terms of assembly, binds the target DNA as a monomer. Two-component system major event consists of a His-to-Asp phosphorelay between a sensor histidine kinase (HK) and a response regulator (RR). In plants, the His-to-Asp phosphorelay involves an additional intermediate named Histidine-containing phosphotransfer protein (HPt). This multistep phosphorelay consists of a His-Asp-His-Asp sequential transfer of a phosphate group between first a His and an Asp of the HK protein, followed by the transfer to a conserved His of the HPt protein and finally the transfer to an Asp in the receiver domain of the RR protein. In terms of tissue distribution, detected in the whole plant. Predominantly expressed in roots and leaves.

The protein resides in the nucleus. Functionally, transcriptional activator that binds specifically to the DNA sequence 5'-[AG]GATT-3'. Functions as a response regulator involved in His-to-Asp phosphorelay signal transduction system. Phosphorylation of the Asp residue in the receiver domain activates the ability of the protein to promote the transcription of target genes. Could directly activate some type-A response regulators in response to cytokinins. This is Two-component response regulator ARR10 (ARR10) from Arabidopsis thaliana (Mouse-ear cress).